The following is a 100-amino-acid chain: Large ribosomal subunit protein bL21 (100 aa).

It belongs to the bacterial ribosomal protein bL21 family. In terms of assembly, part of the 50S ribosomal subunit. Contacts protein L20.

Functionally, this protein binds to 23S rRNA in the presence of protein L20. The sequence is that of Large ribosomal subunit protein bL21 from Mycoplasma mycoides subsp. mycoides SC (strain CCUG 32753 / NCTC 10114 / PG1).